Consider the following 299-residue polypeptide: Biotin synthase (299 aa).

The Radical SAM core domain occupies 22-252 (TSNLKLDLCS…NVTIKIAAGR (231 aa)). [4Fe-4S] cluster is bound by residues cysteine 40, cysteine 44, and cysteine 47. Residues cysteine 116, cysteine 176, and lysine 247 each coordinate [2Fe-2S] cluster.

The protein belongs to the radical SAM superfamily. Biotin synthase family. As to quaternary structure, homodimer. The cofactor is [4Fe-4S] cluster. It depends on [2Fe-2S] cluster as a cofactor.

The enzyme catalyses (4R,5S)-dethiobiotin + (sulfur carrier)-SH + 2 reduced [2Fe-2S]-[ferredoxin] + 2 S-adenosyl-L-methionine = (sulfur carrier)-H + biotin + 2 5'-deoxyadenosine + 2 L-methionine + 2 oxidized [2Fe-2S]-[ferredoxin]. It participates in cofactor biosynthesis; biotin biosynthesis; biotin from 7,8-diaminononanoate: step 2/2. In terms of biological role, catalyzes the conversion of dethiobiotin (DTB) to biotin by the insertion of a sulfur atom into dethiobiotin via a radical-based mechanism. The protein is Biotin synthase of Thermotoga petrophila (strain ATCC BAA-488 / DSM 13995 / JCM 10881 / RKU-1).